Reading from the N-terminus, the 537-residue chain is Serendipity locus protein alpha (537 aa).

It localises to the cytoplasm. The protein localises to the cell membrane. Its function is as follows. Required for the cellularization of the syncytial blastoderm embryo. Involved in the localization of the actin filaments just prior to and during plasma membrane invagination. Sry-alpha together with nullo and bnk may provide auxiliary functions, by acting both to stabilize a large and dynamic microfilament structure and regulate its functions. The protein is Serendipity locus protein alpha (Sry-alpha) of Drosophila virilis (Fruit fly).